A 254-amino-acid chain; its full sequence is Coiled-coil domain-containing protein 152 (254 aa).

Positions 61–246 form a coiled coil; the sequence is SIKEECATLH…LEQRLSVGKD (186 aa).

Detected in stomach.

The protein is Coiled-coil domain-containing protein 152 (CCDC152) of Homo sapiens (Human).